A 182-amino-acid polypeptide reads, in one-letter code: MELELGLAPPNSGHLVVDELSSSSSSGGGSGSAPVSASSAGKRGFREAFQETLLLFDDGSCCNTSDDDCRRRKKTVVGWPPVSSARRACGGANYVKVKKEGDAIGRKVDLALHSSYDELAATLARMFPTNDHQGEKKMANDDHGDAAGPVVTYEDGDGDWMLVGDVPWDDFARSVKRLKILG.

Positions 1 to 41 (MELELGLAPPNSGHLVVDELSSSSSSGGGSGSAPVSASSAG) are disordered. Positions 3–7 (LELGL) match the EAR-like (transcriptional repression) motif. The segment covering 32–41 (SAPVSASSAG) has biased composition (low complexity). The PB1 domain maps to 92 to 182 (ANYVKVKKEG…RSVKRLKILG (91 aa)).

Belongs to the Aux/IAA family. In terms of assembly, homodimers and heterodimers. Expressed in etiolated shoots and flowers.

The protein resides in the nucleus. Its function is as follows. Aux/IAA proteins are short-lived transcriptional factors that function as repressors of early auxin response genes at low auxin concentrations. The sequence is that of Auxin-responsive protein IAA9 (IAA9) from Oryza sativa subsp. japonica (Rice).